We begin with the raw amino-acid sequence, 134 residues long: Small ribosomal subunit protein bS6 (134 aa).

The segment at 100-134 is disordered; that stretch reads SFLARDETDRRERSEETAEGEGEPDHSANEAVVTA. A compositionally biased stretch (basic and acidic residues) spans 103–115; sequence ARDETDRRERSEE.

This sequence belongs to the bacterial ribosomal protein bS6 family.

Its function is as follows. Binds together with bS18 to 16S ribosomal RNA. The sequence is that of Small ribosomal subunit protein bS6 from Acidithiobacillus ferrooxidans (strain ATCC 23270 / DSM 14882 / CIP 104768 / NCIMB 8455) (Ferrobacillus ferrooxidans (strain ATCC 23270)).